The sequence spans 227 residues: NAD(P)H-quinone oxidoreductase subunit K, chloroplastic (227 aa).

Cys43, Cys44, Cys108, and Cys139 together coordinate [4Fe-4S] cluster.

It belongs to the complex I 20 kDa subunit family. NDH is composed of at least 16 different subunits, 5 of which are encoded in the nucleus. The cofactor is [4Fe-4S] cluster.

It localises to the plastid. It is found in the chloroplast thylakoid membrane. It carries out the reaction a plastoquinone + NADH + (n+1) H(+)(in) = a plastoquinol + NAD(+) + n H(+)(out). It catalyses the reaction a plastoquinone + NADPH + (n+1) H(+)(in) = a plastoquinol + NADP(+) + n H(+)(out). NDH shuttles electrons from NAD(P)H:plastoquinone, via FMN and iron-sulfur (Fe-S) centers, to quinones in the photosynthetic chain and possibly in a chloroplast respiratory chain. The immediate electron acceptor for the enzyme in this species is believed to be plastoquinone. Couples the redox reaction to proton translocation, and thus conserves the redox energy in a proton gradient. In Ranunculus macranthus (Large buttercup), this protein is NAD(P)H-quinone oxidoreductase subunit K, chloroplastic.